The following is a 452-amino-acid chain: MAAKVADDVANLKLDDSNTKPASGAAENGDKPTGDAEHDDSDDDNEAEDGAPEAGEGAAKKKKKRKPRKKKKAAGAAGAGGAKVQTAPPRVRIDEVFPNDSYPEGEIQEYVNENAYRTTNEEKRHLDRMNNDFLTEYRKGAEIHREVRQWAQKWIKPGMGLTEIAEGIEDSVRALTGHQGLGNGDAQIAGMGFPTGLSINHCAAHYTPNAGNKMVVNYEDVMKVDFGVHINGRIVDSAFTLTFDPVYDNLINACKAATNAGIKEAGIDVRMSDIGAAIQEVMESYEVEIKGEMLPVKCIRNLNGHSIGHYTIHGGKTVPIVKGGDQTKMEEGETFAIETFGSTGKGYVRDDMETSHYAMKADAPKVALRVSSAKTLLSSITKNFGTLPFCRRYLDRMGHDKYLLGLNNLVSAGIVEAYPPLCDIKGSYTAQSEHTFVLRPTCKEVLSRGDDY.

Positions 1-100 are disordered; sequence MAAKVADDVA…VRIDEVFPND (100 aa). The segment covering 37–51 has biased composition (acidic residues); sequence EHDDSDDDNEAEDGA. The span at 60–73 shows a compositional bias: basic residues; sequence KKKKKRKPRKKKKA. Histidine 205 contacts substrate. Residues aspartate 225, aspartate 236, and histidine 305 each coordinate a divalent metal cation. Histidine 313 serves as a coordination point for substrate. Residues glutamate 338 and glutamate 433 each coordinate a divalent metal cation.

Belongs to the peptidase M24A family. Methionine aminopeptidase eukaryotic type 2 subfamily. The cofactor is Co(2+). Requires Zn(2+) as cofactor. Mn(2+) is required as a cofactor. Fe(2+) serves as cofactor.

It localises to the cytoplasm. The catalysed reaction is Release of N-terminal amino acids, preferentially methionine, from peptides and arylamides.. In terms of biological role, cotranslationally removes the N-terminal methionine from nascent proteins. The N-terminal methionine is often cleaved when the second residue in the primary sequence is small and uncharged (Met-Ala-, Cys, Gly, Pro, Ser, Thr, or Val). The chain is Methionine aminopeptidase 2-1 from Pyrenophora teres f. teres (strain 0-1) (Barley net blotch fungus).